Reading from the N-terminus, the 328-residue chain is tRNA uridine(34) hydroxylase (328 aa).

Positions 130-224 (LDKDTVVLDT…YGKDPEVQGE (95 aa)) constitute a Rhodanese domain. Catalysis depends on cysteine 184, which acts as the Cysteine persulfide intermediate.

The protein belongs to the TrhO family.

The catalysed reaction is uridine(34) in tRNA + AH2 + O2 = 5-hydroxyuridine(34) in tRNA + A + H2O. In terms of biological role, catalyzes oxygen-dependent 5-hydroxyuridine (ho5U) modification at position 34 in tRNAs. This is tRNA uridine(34) hydroxylase from Streptococcus pneumoniae serotype 19F (strain G54).